Here is a 432-residue protein sequence, read N- to C-terminus: Trigger factor (432 aa).

In terms of domain architecture, PPIase FKBP-type spans 161-246 (EDRVTIDFTG…LKKVEERELP (86 aa)).

It belongs to the FKBP-type PPIase family. Tig subfamily.

The protein resides in the cytoplasm. It catalyses the reaction [protein]-peptidylproline (omega=180) = [protein]-peptidylproline (omega=0). Involved in protein export. Acts as a chaperone by maintaining the newly synthesized protein in an open conformation. Functions as a peptidyl-prolyl cis-trans isomerase. The sequence is that of Trigger factor from Salmonella typhi.